Reading from the N-terminus, the 147-residue chain is Small nuclear ribonucleoprotein-associated protein B (147 aa).

The Sm domain occupies 1–84 (MGTTKMVSLL…IVSLSVQGPP (84 aa)). 2 disordered regions span residues 87–106 (DPSM…PAGR) and 128–147 (APPP…FRPV).

Belongs to the snRNP SmB/SmN family. Belongs to the 40S cdc5-associated complex (or cwf complex), a spliceosome sub-complex reminiscent of a late-stage spliceosome composed of the U2, U5 and U6 snRNAs and at least brr2, cdc5, cwf2/prp3, cwf3/syf1, cwf4/syf3, cwf5/ecm2, spp42/cwf6, cwf7/spf27, cwf8, cwf9, cwf10, cwf11, cwf12, prp45/cwf13, cwf14, cwf15, cwf16, cwf17, cwf18, cwf19, cwf20, cwf21, cwf22, cwf23, cwf24, cwf25, cwf26, cyp7/cwf27, cwf28, cwf29/ist3, lea1, msl1, prp5/cwf1, prp10, prp12/sap130, prp17, prp22, sap61, sap62, sap114, sap145, slu7, smb1, smd1, smd3, smf1, smg1 and syf2.

It localises to the nucleus. It is found in the cytoplasm. Functionally, plays a role in pre-mRNA splicing as a core component of the spliceosomal U1, U2, U4 and U5 small nuclear ribonucleoproteins (snRNPs), the building blocks of the spliceosome. In Schizosaccharomyces pombe (strain 972 / ATCC 24843) (Fission yeast), this protein is Small nuclear ribonucleoprotein-associated protein B (smb1).